A 359-amino-acid chain; its full sequence is Prostaglandin D2 receptor (359 aa).

At 1–21 (MKSPFYRCQNTTSVEKGNSAV) the chain is on the extracellular side. An N-linked (GlcNAc...) asparagine glycan is attached at asparagine 10. A helical membrane pass occupies residues 22-42 (MGGVLFSTGLLGNLLALGLLA). At 43–59 (RSGLGWCSRRPLRPLPS) the chain is on the cytoplasmic side. A helical membrane pass occupies residues 60–80 (VFYMLVCGLTVTDLLGKCLLS). The Extracellular portion of the chain corresponds to 81–107 (PVVLAAYAQNRSLRVLAPALDNSLCQA). N-linked (GlcNAc...) asparagine glycosylation occurs at asparagine 90. The cysteines at positions 105 and 183 are disulfide-linked. Residues 108-128 (FAFFMSFFGLSSTLQLLAMAL) traverse the membrane as a helical segment. At 129-150 (ECWLSLGHPFFYRRHITLRLGA) the chain is on the cytoplasmic side. A helical transmembrane segment spans residues 151–171 (LVAPVVSAFSLAFCALPFMGF). The Extracellular segment spans residues 172–195 (GKFVQYCPGTWCFIQMVHEEGSLS). The chain crosses the membrane as a helical span at residues 196–216 (VLGYSVLYSSLMALLVLATVL). Over 217–262 (CNLGAMRNLYAMHRRLQRHPRSCTRDCAEPRADGREASPQPLEELD) the chain is Cytoplasmic. Residues 263-283 (HLLLLALMTVLFTMCSLPVIY) form a helical membrane-spanning segment. Residues 284 to 310 (RAYYGAFKDVKEKNRTSEEAEDLRALR) are Extracellular-facing. Asparagine 297 carries N-linked (GlcNAc...) asparagine glycosylation. The helical transmembrane segment at 311 to 331 (FLSVISIVDPWIFIIFRSPVF) threads the bilayer. Topologically, residues 332 to 359 (RIFFHKIFIRPLRYRSRCSNSTNMESSL) are cytoplasmic.

The protein belongs to the G-protein coupled receptor 1 family. Expressed in retinal choroid, ciliary epithelium, longitudinal and circular ciliary muscles, iris, small intestine and platelet membranes.

It is found in the cell membrane. In terms of biological role, receptor for prostaglandin D2 (PGD2). The activity of this receptor is mainly mediated by G(s) proteins that stimulate adenylate cyclase, resulting in an elevation of intracellular cAMP. A mobilization of calcium is also observed, but without formation of inositol 1,4,5-trisphosphate. Involved in PLA2G3-dependent maturation of mast cells. PLA2G3 is secreted by immature mast cells and acts on nearby fibroblasts upstream to PTDGS to synthesize PGD2, which in turn promotes mast cell maturation and degranulation via PTGDR. In Homo sapiens (Human), this protein is Prostaglandin D2 receptor (PTGDR).